A 224-amino-acid chain; its full sequence is GrpE protein homolog 2, mitochondrial (224 aa).

A mitochondrion-targeting transit peptide spans 1-31 (MAARLLWAVRRRMQPLAAHAASEGRGWLHPF). N6-acetyllysine is present on K141.

The protein belongs to the GrpE family. Probable component of the PAM complex at least composed of a mitochondrial HSP70 protein, GRPEL1 or GRPEL2, TIMM44, TIMM16/PAM16 and TIMM14/DNAJC19.

It localises to the mitochondrion matrix. Essential component of the PAM complex, a complex required for the translocation of transit peptide-containing proteins from the inner membrane into the mitochondrial matrix in an ATP-dependent manner. Seems to control the nucleotide-dependent binding of mitochondrial HSP70 to substrate proteins. Stimulates ATPase activity of mt-HSP70. May also serve to modulate the interconversion of oligomeric (inactive) and monomeric (active) forms of mt-HSP70. The protein is GrpE protein homolog 2, mitochondrial (GRPEL2) of Bos taurus (Bovine).